The sequence spans 658 residues: Palmitoyltransferase ZDHHC5-B (658 aa).

Topologically, residues 1-24 are cytoplasmic; it reads MPVGLSVGGALGDPSPSRPFRPSR. The helical transmembrane segment at 25 to 45 threads the bilayer; the sequence is YVPVSAATAFLVGATTLFLCF. At 46-56 the chain is on the extracellular side; sequence TCPWLSEKFSS. The chain crosses the membrane as a helical span at residues 57 to 77; it reads FIPLYNVVVFLFTLANFCMAT. Over 78 to 159 the chain is Cytoplasmic; it reads FMDPGVFPRA…NCIGRRNYRY (82 aa). Positions 115–165 constitute a DHHC domain; the sequence is KWCSTCRFYRPPRCSHCSVCDNCVEEFDHHCPWVNNCIGRRNYRYFFLFLL. The S-palmitoyl cysteine intermediate role is filled by cysteine 145. Residues 160–180 form a helical membrane-spanning segment; sequence FFLFLLSLTVHIMDVFGFSLL. Over 181 to 202 the chain is Extracellular; that stretch reads YILHHTKQLDLVQSGVTMAVMC. A helical transmembrane segment spans residues 203 to 223; sequence VAGLFFVPVAGLTGFHVVLVA. Topologically, residues 224-658 are cytoplasmic; sequence RGRTTNEQVT…VGGTTYEISV (435 aa). 3 disordered regions span residues 306–419, 490–522, and 540–658; these read EIME…RSGS, ESLL…LSTA, and QREG…EISV. Over residues 360 to 398 the composition is skewed to polar residues; the sequence is PGKNHTASTHSSKMSRGNSMTESPSVPVTTGQPSYRSDP. Gly residues predominate over residues 407–419; that stretch reads GCRGGAEGGRSGS. A compositionally biased stretch (pro residues) spans 565-575; sequence SSPPSRAPPLS. Residues 619–633 show a composition bias toward polar residues; sequence SMPNSTIKQNVANHN. Residues 634-644 show a composition bias toward basic residues; sequence THSHKPARGVK.

It belongs to the DHHC palmitoyltransferase family. ERF2/ZDHHC9 subfamily.

It is found in the cell membrane. It carries out the reaction L-cysteinyl-[protein] + hexadecanoyl-CoA = S-hexadecanoyl-L-cysteinyl-[protein] + CoA. In terms of biological role, palmitoyltransferase that catalyzes the addition of palmitate onto various protein substrates and is involved in a variety of cellular processes. The chain is Palmitoyltransferase ZDHHC5-B from Danio rerio (Zebrafish).